The following is a 295-amino-acid chain: Guided entry of tail-anchored proteins factor CAMLG (295 aa).

Disordered stretches follow at residues 1–73 and 127–148; these read MEPM…ILNP and GVEL…RGSH. At 1-188 the chain is on the cytoplasmic side; it reads MEPMPSATDG…RTTEEFDSFR (188 aa). Polar residues predominate over residues 15 to 24; the sequence is ATPSGLSASQ. At Ser-53 the chain carries Phosphoserine. Residues 127 to 138 show a composition bias toward basic and acidic residues; it reads GVELRQRNRGDL. Residues 189–206 form a helical membrane-spanning segment; that stretch reads IFRLVGCALLALVVRAFV. Residues 207-208 are Lumenal-facing; that stretch reads CK. Cys-207 and Cys-283 are disulfide-bonded. The helical transmembrane segment at 209-227 threads the bilayer; sequence YLSIFAPFLTLQLAYMGLY. The Cytoplasmic portion of the chain corresponds to 228–268; sequence KYFPKGEKKVKTTVLTAALLLSGIPAEVINRSMDTYSKMGE. A helical membrane pass occupies residues 269–287; sequence VFTDLCVYFFTFIFCHEVL. Residues 288 to 295 are Lumenal-facing; sequence EYWGPEVP.

As to quaternary structure, component of the Golgi to ER traffic (GET) complex, which is composed of GET1/WRB, CAMLG/GET2 and GET3/TRC40. Within the complex, GET1 and CAMLG form a heterotetramer which is stabilized by phosphatidylinositol binding and which binds to the GET3 homodimer. Interacts (via C-terminus) with GET1. Interacts (via N-terminus) with GET3. GET3 shows a higher affinity for CAMLG than for GET1. Interacts (via N-terminus) with TNFRSF13B/TACI (via C-terminus). In the central nervous system, expressed in astrocytes, microglia and neurons (at protein level).

It is found in the endoplasmic reticulum membrane. Its function is as follows. Required for the post-translational delivery of tail-anchored (TA) proteins to the endoplasmic reticulum. Together with GET1/WRB, acts as a membrane receptor for soluble GET3/TRC40, which recognizes and selectively binds the transmembrane domain of TA proteins in the cytosol. Required for the stability of GET1. Stimulates calcium signaling in T cells through its involvement in elevation of intracellular calcium. Essential for the survival of peripheral follicular B cells. The polypeptide is Guided entry of tail-anchored proteins factor CAMLG (Rattus norvegicus (Rat)).